Reading from the N-terminus, the 679-residue chain is E3 ubiquitin ligase RNF157 (679 aa).

The N-myristoyl glycine moiety is linked to residue Gly2. The segment at 277-316 (CVVCLSDVRDTLILPCRHLCLCNTCADTLRYQANNCPICR) adopts an RING-type zinc-finger fold. The short motif at 329 to 332 (RKKL) is the D-box 1 element. Composition is skewed to polar residues over residues 339–349 (SFNPIISSQTS) and 478–537 (ESEN…SMSG). Disordered stretches follow at residues 339-362 (SFNP…NIPP), 416-604 (LDRL…TQEG), and 650-679 (VSRN…PLAV). The span at 585-598 (QDAEGNDVIEEEDG) shows a compositional bias: acidic residues. Positions 656 to 659 (RRRL) match the D-box 2 motif. A phosphoserine mark is found at Ser660, Ser661, Ser662, and Ser663.

As to quaternary structure, interacts with APBB1. Interacts with CHD1; CHD1-binding controls RNF157 stability. Interacts with ATRN, MEGF8, TECR, MSI2, PLRG1, BYSL, MTERF3, PSMA1, MRPS18B, PRPF4, FASTKD2, SLC25A1, SMU1, CNOT9, MRPS2, MAGT1, FXR2, EMD, PSMD8, HDAC1, RAN, HSD17B12, TXNDC5 and MRPL19. In terms of processing, phosphorylation at Ser-660, Ser-661, Ser-662 and Ser-663 downstream of the PI3K and MAPK pathways influences the E3 ligase activity and stability of RNF157 during the cell cycle in an anaphase-promoting complex/cyclosome-CDH1-dependent manner.

It localises to the cytoplasm. It carries out the reaction S-ubiquitinyl-[E2 ubiquitin-conjugating enzyme]-L-cysteine + [acceptor protein]-L-lysine = [E2 ubiquitin-conjugating enzyme]-L-cysteine + N(6)-ubiquitinyl-[acceptor protein]-L-lysine.. Functionally, E3 ubiquitin ligase that ubiquitinates APBB1 for its degradation by the proteasome and thus prevents apoptosis and promotes survival of neurons. Has a dual role in neurons as it is also required for dendrite growth and maintenance for which its ligase activity is not critical. May act as a scaffold molecule to regulate this process. Acts as a downstream effector of the interconnected PI3K and MAPK signaling pathways and thus participates in the regulation of the cell cycle. The sequence is that of E3 ubiquitin ligase RNF157 (RNF157) from Homo sapiens (Human).